We begin with the raw amino-acid sequence, 294 residues long: tRNA dimethylallyltransferase (294 aa).

10–17 (GPTAVGKT) contributes to the ATP binding site. Substrate is bound at residue 12 to 17 (TAVGKT). The segment at 35–38 (DSQQ) is interaction with substrate tRNA.

Belongs to the IPP transferase family. As to quaternary structure, monomer. The cofactor is Mg(2+).

It catalyses the reaction adenosine(37) in tRNA + dimethylallyl diphosphate = N(6)-dimethylallyladenosine(37) in tRNA + diphosphate. Functionally, catalyzes the transfer of a dimethylallyl group onto the adenine at position 37 in tRNAs that read codons beginning with uridine, leading to the formation of N6-(dimethylallyl)adenosine (i(6)A). This is tRNA dimethylallyltransferase from Streptococcus pneumoniae (strain ATCC 700669 / Spain 23F-1).